The primary structure comprises 156 residues: Small ribosomal subunit protein uS7 (156 aa).

It belongs to the universal ribosomal protein uS7 family. As to quaternary structure, part of the 30S ribosomal subunit. Contacts proteins S9 and S11.

One of the primary rRNA binding proteins, it binds directly to 16S rRNA where it nucleates assembly of the head domain of the 30S subunit. Is located at the subunit interface close to the decoding center, probably blocks exit of the E-site tRNA. The chain is Small ribosomal subunit protein uS7 from Leptothrix cholodnii (strain ATCC 51168 / LMG 8142 / SP-6) (Leptothrix discophora (strain SP-6)).